Here is an 86-residue protein sequence, read N- to C-terminus: Small ribosomal subunit protein bS20 (86 aa).

Over residues 1-11 the composition is skewed to basic residues; it reads MANIKSAKKRA. Residues 1 to 26 form a disordered region; that stretch reads MANIKSAKKRAITSEKNRQHNASRRS.

Belongs to the bacterial ribosomal protein bS20 family.

Functionally, binds directly to 16S ribosomal RNA. In Pseudoalteromonas translucida (strain TAC 125), this protein is Small ribosomal subunit protein bS20.